Consider the following 683-residue polypeptide: U4/U6 small nuclear ribonucleoprotein Prp3 (683 aa).

The region spanning 1 to 87 (MALSKRELDE…HSKSSSDRSR (87 aa)) is the PWI domain. The segment covering 73 to 107 (GRSSRHSKSSSDRSRKRELKEVFGDDSEISKESSG) has biased composition (basic and acidic residues). Residues 73-135 (GRSSRHSKSS…IPGPPSESPG (63 aa)) are disordered. A Glycyl lysine isopeptide (Lys-Gly) (interchain with G-Cter in SUMO2) cross-link involves residue Lys139. The interval 153-183 (IEERKKQLSFISPPTPQPKTPSSSQPERLPI) is disordered. Ser164 carries the phosphoserine modification. Position 167 is a phosphothreonine (Thr167). Glycyl lysine isopeptide (Lys-Gly) (interchain with G-Cter in SUMO2) cross-links involve residues Lys244 and Lys252. The mediates interaction with SART3 stretch occupies residues 416–550 (NLVEHPAQLN…VHISVYRVRN (135 aa)). Position 619 is a phosphoserine (Ser619).

As to quaternary structure, component of the precatalytic spliceosome (spliceosome B complex). Component of the U4/U6-U5 tri-snRNP complex, a building block of the precatalytic spliceosome (spliceosome B complex). The U4/U6-U5 tri-snRNP complex is composed of the U4, U6 and U5 snRNAs and at least PRPF3, PRPF4, PRPF6, PRPF8, PRPF31, SNRNP200, TXNL4A, SNRNP40, SNRPB, SNRPD1, SNRPD2, SNRPD3, SNRPE, SNRPF, SNRPG, DDX23, CD2BP2, PPIH, SNU13, EFTUD2, SART1 and USP39, plus LSM2, LSM3, LSM4, LSM5, LSM6, LSM7 and LSM8. Interacts directly with PRPF4. Part of a heteromeric complex containing PPIH, PRPF3 and PRPF4 that is stable in the absence of RNA. Interacts with SART3; the interaction is direct and recruits the deubiquitinase USP4 to PRPF3. Interacts with PRPF19. Interacts ('Lys-63'-linked polyubiquitinated) with PRPF8 (via the MPN (JAB/Mov34) domain); may stabilize the U4/U6-U5 tri-snRNP complex. Interacts with ERCC6. Post-translationally, ubiquitinated. Undergoes 'Lys-63'-linked polyubiquitination by PRPF19 and deubiquitination by USP4. 'Lys-63'-linked ubiquitination increases the affinity for PRPF8 and may regulate the assembly of the U4/U6-U5 tri-snRNP complex.

The protein resides in the nucleus. It is found in the nucleus speckle. In terms of biological role, plays a role in pre-mRNA splicing as component of the U4/U6-U5 tri-snRNP complex that is involved in spliceosome assembly, and as component of the precatalytic spliceosome (spliceosome B complex). This is U4/U6 small nuclear ribonucleoprotein Prp3 (PRPF3) from Pongo abelii (Sumatran orangutan).